The sequence spans 835 residues: Protein translocase subunit SecA (835 aa).

ATP contacts are provided by residues glutamine 85, 103-107 (GEGKT), and aspartate 492. The tract at residues 788 to 807 (VQGEAVHPSSDGEEAKKKPV) is disordered. Residues cysteine 819, cysteine 821, cysteine 830, and cysteine 831 each coordinate Zn(2+).

It belongs to the SecA family. As to quaternary structure, monomer and homodimer. Part of the essential Sec protein translocation apparatus which comprises SecA, SecYEG and auxiliary proteins SecDF. Other proteins may also be involved. Requires Zn(2+) as cofactor.

The protein localises to the cell membrane. The protein resides in the cytoplasm. It catalyses the reaction ATP + H2O + cellular proteinSide 1 = ADP + phosphate + cellular proteinSide 2.. Its function is as follows. Part of the Sec protein translocase complex. Interacts with the SecYEG preprotein conducting channel. Has a central role in coupling the hydrolysis of ATP to the transfer of proteins into and across the cell membrane, serving as an ATP-driven molecular motor driving the stepwise translocation of polypeptide chains across the membrane. The sequence is that of Protein translocase subunit SecA from Bacillus cereus (strain ATCC 10987 / NRS 248).